A 370-amino-acid polypeptide reads, in one-letter code: Platelet-derived growth factor D (370 aa).

The N-terminal stretch at 1-18 is a signal peptide; sequence MHRLIFVCTLVCANFCSC. In terms of domain architecture, CUB spans 52 to 170; that stretch reads RDETIQVRGN…PGFKIYYSLL (119 aa). Cysteine 109 and cysteine 131 are oxidised to a cystine. Asparagine 276 carries an N-linked (GlcNAc...) asparagine glycan. Intrachain disulfides connect cysteine 302–cysteine 360 and cysteine 306–cysteine 362.

This sequence belongs to the PDGF/VEGF growth factor family. As to quaternary structure, homodimer; disulfide-linked. Interacts with PDGFRB homodimers, and with heterodimers formed by PDGFRA and PDGFRB. Activated by proteolytic cleavage. Proteolytic removal of the N-terminal CUB domain releasing the core domain is necessary for unmasking the receptor-binding epitopes of the core domain. Cleavage after Arg-247 or Arg-249 by urokinase plasminogen activator gives rise to the active form.

It is found in the secreted. Growth factor that plays an essential role in the regulation of embryonic development, cell proliferation, cell migration, survival and chemotaxis. Potent mitogen for cells of mesenchymal origin. Plays an important role in wound healing. Induces macrophage recruitment, increased interstitial pressure, and blood vessel maturation during angiogenesis. Can initiate events that lead to a mesangial proliferative glomerulonephritis, including influx of monocytes and macrophages and production of extracellular matrix. This is Platelet-derived growth factor D (PDGFD) from Pongo abelii (Sumatran orangutan).